The chain runs to 160 residues: Transcription elongation factor GreA (160 aa).

Residues 49-75 (SEYDEAKNDQAFTEGKILQLENKLKNA) adopt a coiled-coil conformation.

Belongs to the GreA/GreB family.

Functionally, necessary for efficient RNA polymerase transcription elongation past template-encoded arresting sites. The arresting sites in DNA have the property of trapping a certain fraction of elongating RNA polymerases that pass through, resulting in locked ternary complexes. Cleavage of the nascent transcript by cleavage factors such as GreA or GreB allows the resumption of elongation from the new 3'terminus. GreA releases sequences of 2 to 3 nucleotides. This chain is Transcription elongation factor GreA, found in Clostridium botulinum (strain Alaska E43 / Type E3).